A 317-amino-acid chain; its full sequence is 4-hydroxy-3-methylbut-2-enyl diphosphate reductase (317 aa).

Residue cysteine 12 participates in [4Fe-4S] cluster binding. Residues histidine 41 and histidine 74 each contribute to the (2E)-4-hydroxy-3-methylbut-2-enyl diphosphate site. Dimethylallyl diphosphate contacts are provided by histidine 41 and histidine 74. Isopentenyl diphosphate is bound by residues histidine 41 and histidine 74. Position 97 (cysteine 97) interacts with [4Fe-4S] cluster. Histidine 125 is a (2E)-4-hydroxy-3-methylbut-2-enyl diphosphate binding site. Histidine 125 is a binding site for dimethylallyl diphosphate. An isopentenyl diphosphate-binding site is contributed by histidine 125. Glutamate 127 (proton donor) is an active-site residue. Threonine 168 serves as a coordination point for (2E)-4-hydroxy-3-methylbut-2-enyl diphosphate. Cysteine 198 provides a ligand contact to [4Fe-4S] cluster. 4 residues coordinate (2E)-4-hydroxy-3-methylbut-2-enyl diphosphate: serine 226, serine 227, asparagine 228, and serine 270. Positions 226, 227, 228, and 270 each coordinate dimethylallyl diphosphate. Isopentenyl diphosphate is bound by residues serine 226, serine 227, asparagine 228, and serine 270.

The protein belongs to the IspH family. As to quaternary structure, homodimer. [4Fe-4S] cluster is required as a cofactor.

It carries out the reaction isopentenyl diphosphate + 2 oxidized [2Fe-2S]-[ferredoxin] + H2O = (2E)-4-hydroxy-3-methylbut-2-enyl diphosphate + 2 reduced [2Fe-2S]-[ferredoxin] + 2 H(+). The catalysed reaction is dimethylallyl diphosphate + 2 oxidized [2Fe-2S]-[ferredoxin] + H2O = (2E)-4-hydroxy-3-methylbut-2-enyl diphosphate + 2 reduced [2Fe-2S]-[ferredoxin] + 2 H(+). It participates in isoprenoid biosynthesis; dimethylallyl diphosphate biosynthesis; dimethylallyl diphosphate from (2E)-4-hydroxy-3-methylbutenyl diphosphate: step 1/1. It functions in the pathway isoprenoid biosynthesis; isopentenyl diphosphate biosynthesis via DXP pathway; isopentenyl diphosphate from 1-deoxy-D-xylulose 5-phosphate: step 6/6. Functionally, catalyzes the conversion of 1-hydroxy-2-methyl-2-(E)-butenyl 4-diphosphate (HMBPP) into a mixture of isopentenyl diphosphate (IPP) and dimethylallyl diphosphate (DMAPP). Acts in the terminal step of the DOXP/MEP pathway for isoprenoid precursor biosynthesis. The polypeptide is 4-hydroxy-3-methylbut-2-enyl diphosphate reductase (Edwardsiella ictaluri (strain 93-146)).